We begin with the raw amino-acid sequence, 137 residues long: Cell division protein SepF (137 aa).

Belongs to the SepF family. Homodimer. Interacts with FtsZ.

Its subcellular location is the cytoplasm. In terms of biological role, cell division protein that is part of the divisome complex and is recruited early to the Z-ring. Probably stimulates Z-ring formation, perhaps through the cross-linking of FtsZ protofilaments. Its function overlaps with FtsA. The chain is Cell division protein SepF from Carboxydothermus hydrogenoformans (strain ATCC BAA-161 / DSM 6008 / Z-2901).